The sequence spans 247 residues: Exosome complex component Rrp4 (247 aa).

Residues 70–143 enclose the S1 motif domain; that stretch reads GDTVIGLIED…INPILSIKGK (74 aa). Residues 149 to 211 enclose the KH domain; that stretch reads SSGIVIDIPP…EALVEAIQII (63 aa).

This sequence belongs to the RRP4 family. In terms of assembly, component of the archaeal exosome complex. Forms a trimer of Rrp4 and/or Csl4 subunits. The trimer associates with a hexameric ring-like arrangement composed of 3 Rrp41-Rrp42 heterodimers.

Its subcellular location is the cytoplasm. Functionally, non-catalytic component of the exosome, which is a complex involved in RNA degradation. Increases the RNA binding and the efficiency of RNA degradation. Confers strong poly(A) specificity to the exosome. The polypeptide is Exosome complex component Rrp4 (Sulfurisphaera tokodaii (strain DSM 16993 / JCM 10545 / NBRC 100140 / 7) (Sulfolobus tokodaii)).